The following is a 1271-amino-acid chain: Zinc finger transcription factor Trps1 (1271 aa).

Disordered stretches follow at residues 1–76 and 124–155; these read MVRK…DSAS and SPIK…DMSP. A compositionally biased stretch (polar residues) spans 34-49; the sequence is SKEISTDPMQENSEQS. Basic and acidic residues predominate over residues 54-65; that stretch reads HNSDDHSFHDQE. A compositionally biased stretch (polar residues) spans 66–76; that stretch reads PSSSINKDSAS. The segment at 217 to 242 adopts a C2H2-type 1; atypical zinc-finger fold; the sequence is FKCNICGYGYYGNDPTDLIKHFRKYH. The C2H2-type 2; atypical zinc-finger motif lies at 328–353; it reads FRCKFCNFTYLAKSATELEQHFLKTH. The interval 353 to 387 is disordered; that stretch reads HPNKMKMSSDSGKPSEKSTNKSSPIPRSCEPGDLG. The C2H2-type 3; atypical zinc finger occupies 426-451; sequence YWCKFCSFSCESSSNSKLLEHHSKQH. A C2H2-type 4; atypical zinc finger spans residues 513 to 543; the sequence is YNCQFCDFRYSKSHGPEVILVGPLLRHYQQH. C2H2-type zinc fingers lie at residues 604–627, 656–679, and 682–705; these read HQCD…ENAH, HSCT…RRVH, and YKCR…NSAH. The segment at 843 to 877 is disordered; that stretch reads GVTAGASGEKSGQHTPQYPTAGDSKSKDESQSLLR. The GATA-type zinc-finger motif lies at 886-910; the sequence is CANCLTTKTSLWRKNANGGYVCNAC. Disordered stretches follow at residues 938-987, 1031-1064, and 1154-1196; these read RTRK…RENQ, SPQE…YMRP, and LDLA…EKSD. Over residues 972–985 the composition is skewed to basic and acidic residues; the sequence is IRSEDHSMEGHQRE. A compositionally biased stretch (low complexity) spans 1031–1049; the sequence is SPQESSGEPGNSSSVSDGK. Composition is skewed to basic and acidic residues over residues 1050–1062 and 1170–1196; these read GSSE…EKYM and DSKE…EKSD. A transcriptional repressor domain region spans residues 1153–1271; it reads PLDLAMKHSR…QAEKNGKNKD (119 aa). Glycyl lysine isopeptide (Lys-Gly) (interchain with G-Cter in SUMO) cross-links involve residues lysine 1182 and lysine 1191. C2H2-type zinc fingers lie at residues 1205 to 1227 and 1233 to 1257; these read TKCV…MSCH and FQCS…RGLH.

Binds specifically to GATA sequences. Post-translationally, sumoylated. Sumoylation in the repressor domain inhibits the transcription repression activity. Sumoylation on Lys-1191 is the major site. Appears to be sumoylated on multiple sites.

Its subcellular location is the nucleus. Transcriptional repressor. Represses expression of GATA-regulated genes at selected sites and stages in vertebrate development. This is Zinc finger transcription factor Trps1 (trps1) from Xenopus laevis (African clawed frog).